Consider the following 163-residue polypeptide: Transcriptional repressor NrdR (163 aa).

A zinc finger lies at Cys3–Cys34. The region spanning Leu49 to Glu139 is the ATP-cone domain.

This sequence belongs to the NrdR family. Zn(2+) serves as cofactor.

Negatively regulates transcription of bacterial ribonucleotide reductase nrd genes and operons by binding to NrdR-boxes. The protein is Transcriptional repressor NrdR of Akkermansia muciniphila (strain ATCC BAA-835 / DSM 22959 / JCM 33894 / BCRC 81048 / CCUG 64013 / CIP 107961 / Muc).